The sequence spans 163 residues: Small ribosomal subunit protein uS9 (163 aa).

A compositionally biased stretch (polar residues) spans 1–11 (MAENTNDSQVV). The interval 1–40 (MAENTNDSQVVETEEELTNYTTETNAGAGTGTSAIEPGYG) is disordered. Residues 18-27 (TNYTTETNAG) are compositionally biased toward low complexity.

This sequence belongs to the universal ribosomal protein uS9 family.

The chain is Small ribosomal subunit protein uS9 from Bifidobacterium longum (strain DJO10A).